We begin with the raw amino-acid sequence, 379 residues long: Sialidase-2 (379 aa).

The short motif at 20 to 23 is the FRIP motif element; it reads YRIP. Residues arginine 21 and arginine 41 each coordinate substrate. Catalysis depends on aspartate 46, which acts as the Proton acceptor. One copy of the BNR 1 repeat lies at 127-138; that stretch reads ITSTDHGKTWSA. Residues tyrosine 179 and tyrosine 181 each coordinate substrate. One copy of the BNR 2 repeat lies at 197–208; that stretch reads FLSHDHGSTWEL. Positions 218, 237, and 303 each coordinate substrate. Residue tyrosine 333 is the Nucleophile of the active site. Glutamate 354 is an active-site residue.

Belongs to the glycosyl hydrolase 33 family.

Its subcellular location is the cytoplasm. The catalysed reaction is Hydrolysis of alpha-(2-&gt;3)-, alpha-(2-&gt;6)-, alpha-(2-&gt;8)- glycosidic linkages of terminal sialic acid residues in oligosaccharides, glycoproteins, glycolipids, colominic acid and synthetic substrates.. In terms of biological role, catalyzes the removal of sialic acid (N-acetylneuraminic acid) moieties from glycoproteins, oligosaccharides and gangliosides. This chain is Sialidase-2 (NEU2), found in Cricetulus griseus (Chinese hamster).